Consider the following 104-residue polypeptide: METIAFRMVLNPGQSEEYRRRHREIWPELVETLREAGIRDYWIFLDDATNHLFAVLKRERDHRMDQLVTDDVMRKWWGFMSDIMATGSDGAPAQKPLVPMFYLP.

A substrate-binding site is contributed by tyrosine 18. Histidine 22 serves as the catalytic Proton donor. Substrate-binding positions include tyrosine 41 and 76-77 (WW).

The protein belongs to the rhamnose mutarotase family. As to quaternary structure, homodimer.

It localises to the cytoplasm. It catalyses the reaction alpha-L-rhamnose = beta-L-rhamnose. It participates in carbohydrate metabolism; L-rhamnose metabolism. Involved in the anomeric conversion of L-rhamnose. The chain is L-rhamnose mutarotase from Burkholderia ambifaria (strain MC40-6).